The sequence spans 186 residues: Holliday junction branch migration complex subunit RuvA (186 aa).

Residues 1–61 are domain I; the sequence is MYRYIKGIVT…EDIFQLYGFK (61 aa). The domain II stretch occupies residues 62 to 134; sequence DEETLNLFLK…LKGKLVNDEL (73 aa). The interval 134–137 is flexible linker; sequence LDMQ. The interval 138–186 is domain III; sequence LLSDNSKDVAAALEALGYNKKEIAKSLKHVNFDQDLNKALKEALAILLK.

It belongs to the RuvA family. Homotetramer. Forms an RuvA(8)-RuvB(12)-Holliday junction (HJ) complex. HJ DNA is sandwiched between 2 RuvA tetramers; dsDNA enters through RuvA and exits via RuvB. An RuvB hexamer assembles on each DNA strand where it exits the tetramer. Each RuvB hexamer is contacted by two RuvA subunits (via domain III) on 2 adjacent RuvB subunits; this complex drives branch migration. In the full resolvosome a probable DNA-RuvA(4)-RuvB(12)-RuvC(2) complex forms which resolves the HJ.

Its subcellular location is the cytoplasm. The RuvA-RuvB-RuvC complex processes Holliday junction (HJ) DNA during genetic recombination and DNA repair, while the RuvA-RuvB complex plays an important role in the rescue of blocked DNA replication forks via replication fork reversal (RFR). RuvA specifically binds to HJ cruciform DNA, conferring on it an open structure. The RuvB hexamer acts as an ATP-dependent pump, pulling dsDNA into and through the RuvAB complex. HJ branch migration allows RuvC to scan DNA until it finds its consensus sequence, where it cleaves and resolves the cruciform DNA. The chain is Holliday junction branch migration complex subunit RuvA from Acholeplasma laidlawii (strain PG-8A).